Here is a 93-residue protein sequence, read N- to C-terminus: Small ribosomal subunit protein uS19 (93 aa).

It belongs to the universal ribosomal protein uS19 family.

In terms of biological role, protein S19 forms a complex with S13 that binds strongly to the 16S ribosomal RNA. In Helicobacter pylori (strain ATCC 700392 / 26695) (Campylobacter pylori), this protein is Small ribosomal subunit protein uS19 (rpsS).